A 392-amino-acid polypeptide reads, in one-letter code: Sugar efflux transporter A (392 aa).

Over 1-10 the chain is Cytoplasmic; it reads MIWIMTMARR. Residues 11–31 traverse the membrane as a helical segment; sequence MNGVYAAFMLVAFMMGVAGAL. The Periplasmic segment spans residues 32–48; that stretch reads QAPTLSLFLSREVGAQP. Residues 49–69 form a helical membrane-spanning segment; it reads FWIGLFYTVNAIAGIGVSLWL. At 70 to 81 the chain is on the cytoplasmic side; that stretch reads AKRSDSQGDRRK. Residues 82–102 traverse the membrane as a helical segment; the sequence is LIIFCCLMAIGNALLFAFNRH. At 103–106 the chain is on the periplasmic side; it reads YLTL. Residues 107-127 traverse the membrane as a helical segment; it reads ITCGVLLASLANTAMPQLFAL. Residues 128 to 149 lie on the Cytoplasmic side of the membrane; the sequence is AREYADNSAREVVMFSSVMRAQ. Residues 150–170 traverse the membrane as a helical segment; the sequence is LSLAWVIGPPLAFMLALNYGF. Residue T171 is a topological domain, periplasmic. Residues 172–192 traverse the membrane as a helical segment; sequence VMFSIAAGIFTLSLVLIAFML. Topologically, residues 193 to 219 are cytoplasmic; that stretch reads PSVARVELPSENALSMQGGWQDSNVRM. The chain crosses the membrane as a helical span at residues 220–240; that stretch reads LFVASTLMWTCNTMYIIDMPL. Residues 241–251 lie on the Periplasmic side of the membrane; sequence WISSELGLPDK. A helical membrane pass occupies residues 252 to 272; the sequence is LAGFLMGTAAGLEIPAMILAG. Topologically, residues 273–282 are cytoplasmic; sequence YYVKRYGKRR. The chain crosses the membrane as a helical span at residues 283-303; that stretch reads MMVIAVAAGVLFYTGLIFFNS. Residues 304-308 lie on the Periplasmic side of the membrane; the sequence is RMALM. Residues 309–329 form a helical membrane-spanning segment; that stretch reads TLQLFNAVFIGIVAGIGMLWF. The Cytoplasmic portion of the chain corresponds to 330 to 342; sequence QDLMPGRAGAATT. A helical transmembrane segment spans residues 343 to 363; it reads LFTNSISTGVILAGVIQGAIA. The Periplasmic portion of the chain corresponds to 364–365; it reads QS. A helical transmembrane segment spans residues 366-386; it reads WGHFAVYWVIAVISVVALFLT. The Cytoplasmic segment spans residues 387-392; the sequence is AKVKDV.

It belongs to the major facilitator superfamily. Set transporter family.

The protein resides in the cell inner membrane. In terms of biological role, involved in the efflux of sugars. The physiological role may be the detoxification of non-metabolizable sugar analogs. Can transport IPTG, lactose and glucose. Has broad substrate specificity, with preferences for glucosides or galactosides with alkyl or aryl substituents. The polypeptide is Sugar efflux transporter A (setA) (Escherichia coli (strain K12)).